Here is a 248-residue protein sequence, read N- to C-terminus: tRNA (guanine-N(1)-)-methyltransferase (248 aa).

S-adenosyl-L-methionine is bound by residues glycine 113 and 133 to 138; that span reads VGDYVL.

The protein belongs to the RNA methyltransferase TrmD family. In terms of assembly, homodimer.

The protein localises to the cytoplasm. It catalyses the reaction guanosine(37) in tRNA + S-adenosyl-L-methionine = N(1)-methylguanosine(37) in tRNA + S-adenosyl-L-homocysteine + H(+). In terms of biological role, specifically methylates guanosine-37 in various tRNAs. This is tRNA (guanine-N(1)-)-methyltransferase from Shewanella sp. (strain ANA-3).